The sequence spans 92 residues: Cell division protein FtsB (92 aa).

Residues 1 to 3 (MRL) lie on the Cytoplasmic side of the membrane. A helical transmembrane segment spans residues 4–21 (LILILLSVLVLFQYNFWF). Residues 22–92 (GSNGFLDYRQ…VFYHIVKESK (71 aa)) lie on the Periplasmic side of the membrane. A coiled-coil region spans residues 28-63 (DYRQNAEKIKENQAENEKLSQRNQRINAEIQGLTKG).

This sequence belongs to the FtsB family. In terms of assembly, part of a complex composed of FtsB, FtsL and FtsQ.

It localises to the cell inner membrane. Essential cell division protein. May link together the upstream cell division proteins, which are predominantly cytoplasmic, with the downstream cell division proteins, which are predominantly periplasmic. The protein is Cell division protein FtsB of Haemophilus influenzae (strain 86-028NP).